The following is a 127-amino-acid chain: Major sperm protein isoform beta (127 aa).

Alanine 2 carries the N-acetylalanine modification. In terms of domain architecture, MSP spans 9–126; sequence DINTQPGSKI…RRKNLPIEYN (118 aa).

As to quaternary structure, forms filaments 10 nm wide, with a characteristic substructure repeating axially at 9 nm. Sperm.

The protein resides in the cell projection. It localises to the pseudopodium. The protein localises to the cytoplasm. Its subcellular location is the cytoskeleton. In terms of biological role, central component in molecular interactions underlying sperm crawling. Forms an extensive filament system that extends from sperm villipoda, along the leading edge of the pseudopod. The sequence is that of Major sperm protein isoform beta from Ascaris suum (Pig roundworm).